The chain runs to 625 residues: Interleukin-1 receptor-associated kinase-like 2 (625 aa).

In terms of domain architecture, Death spans 13-94 (LDDLCRNMDA…RAAQIILNWK (82 aa)). Positions 111 to 181 (KPEKPLAASV…SSDSKDFSTS (71 aa)) are disordered. Phosphoserine is present on serine 144. Polar residues predominate over residues 169–181 (LPTSSDSKDFSTS). In terms of domain architecture, Protein kinase spans 210 to 489 (FNQNRKISQG…LCLRRRNTSL (280 aa)). ATP contacts are provided by residues 216–224 (ISQGTFADV), lysine 237, and 337–340 (KSSN). The disordered stretch occupies residues 510-540 (LPWSGLSEGTGSSSNTPEETDDVDNSSLDAS). Positions 516-526 (SEGTGSSSNTP) are enriched in polar residues.

This sequence belongs to the protein kinase superfamily. TKL Ser/Thr protein kinase family. Pelle subfamily. Interacts with MYD88. IL-1 stimulation leads to the formation of a signaling complex which dissociates from the IL-1 receptor following the binding of PELI1. As to expression, expressed in spleen, thymus, prostate, lung, liver, skeletal muscle, kidney, pancreas and peripheral blood leukocytes.

Binds to the IL-1 type I receptor following IL-1 engagement, triggering intracellular signaling cascades leading to transcriptional up-regulation and mRNA stabilization. In Homo sapiens (Human), this protein is Interleukin-1 receptor-associated kinase-like 2 (IRAK2).